A 466-amino-acid chain; its full sequence is Ribulose bisphosphate carboxylase large chain (466 aa).

An N6,N6,N6-trimethyllysine modification is found at Lys-5. Substrate-binding residues include Asn-114 and Thr-164. Residue Lys-166 is the Proton acceptor of the active site. Lys-168 lines the substrate pocket. Lys-192, Asp-194, and Glu-195 together coordinate Mg(2+). Residue Lys-192 is modified to N6-carboxylysine. The Proton acceptor role is filled by His-285. Residues Arg-286, His-318, and Ser-370 each contribute to the substrate site.

It belongs to the RuBisCO large chain family. Type I subfamily. In terms of assembly, heterohexadecamer of 8 large chains and 8 small chains; disulfide-linked. The disulfide link is formed within the large subunit homodimers. It depends on Mg(2+) as a cofactor. In terms of processing, the disulfide bond which can form in the large chain dimeric partners within the hexadecamer appears to be associated with oxidative stress and protein turnover.

Its subcellular location is the plastid. It localises to the chloroplast. The enzyme catalyses 2 (2R)-3-phosphoglycerate + 2 H(+) = D-ribulose 1,5-bisphosphate + CO2 + H2O. It catalyses the reaction D-ribulose 1,5-bisphosphate + O2 = 2-phosphoglycolate + (2R)-3-phosphoglycerate + 2 H(+). RuBisCO catalyzes two reactions: the carboxylation of D-ribulose 1,5-bisphosphate, the primary event in carbon dioxide fixation, as well as the oxidative fragmentation of the pentose substrate in the photorespiration process. Both reactions occur simultaneously and in competition at the same active site. This Oxalis dillenii (Gray-green wood sorrel) protein is Ribulose bisphosphate carboxylase large chain.